Reading from the N-terminus, the 404-residue chain is Argininosuccinate synthase (404 aa).

9 to 17 (AYSGGLDTS) contacts ATP. An L-citrulline-binding site is contributed by Y86. G116 contributes to the ATP binding site. L-aspartate-binding residues include T118, N122, and D123. N122 contacts L-citrulline. R126, S174, S183, E259, and Y271 together coordinate L-citrulline.

This sequence belongs to the argininosuccinate synthase family. Type 1 subfamily. In terms of assembly, homotetramer.

Its subcellular location is the cytoplasm. The catalysed reaction is L-citrulline + L-aspartate + ATP = 2-(N(omega)-L-arginino)succinate + AMP + diphosphate + H(+). The protein operates within amino-acid biosynthesis; L-arginine biosynthesis; L-arginine from L-ornithine and carbamoyl phosphate: step 2/3. The chain is Argininosuccinate synthase from Listeria monocytogenes serovar 1/2a (strain ATCC BAA-679 / EGD-e).